Consider the following 254-residue polypeptide: 3-deoxy-manno-octulosonate cytidylyltransferase (254 aa).

It belongs to the KdsB family.

Its subcellular location is the cytoplasm. The catalysed reaction is 3-deoxy-alpha-D-manno-oct-2-ulosonate + CTP = CMP-3-deoxy-beta-D-manno-octulosonate + diphosphate. Its pathway is nucleotide-sugar biosynthesis; CMP-3-deoxy-D-manno-octulosonate biosynthesis; CMP-3-deoxy-D-manno-octulosonate from 3-deoxy-D-manno-octulosonate and CTP: step 1/1. It participates in bacterial outer membrane biogenesis; lipopolysaccharide biosynthesis. Functionally, activates KDO (a required 8-carbon sugar) for incorporation into bacterial lipopolysaccharide in Gram-negative bacteria. The chain is 3-deoxy-manno-octulosonate cytidylyltransferase from Pseudomonas paraeruginosa (strain DSM 24068 / PA7) (Pseudomonas aeruginosa (strain PA7)).